The chain runs to 243 residues: 3-deoxy-manno-octulosonate cytidylyltransferase (243 aa).

Belongs to the KdsB family.

It localises to the cytoplasm. The enzyme catalyses 3-deoxy-alpha-D-manno-oct-2-ulosonate + CTP = CMP-3-deoxy-beta-D-manno-octulosonate + diphosphate. The protein operates within nucleotide-sugar biosynthesis; CMP-3-deoxy-D-manno-octulosonate biosynthesis; CMP-3-deoxy-D-manno-octulosonate from 3-deoxy-D-manno-octulosonate and CTP: step 1/1. It participates in bacterial outer membrane biogenesis; lipopolysaccharide biosynthesis. Activates KDO (a required 8-carbon sugar) for incorporation into bacterial lipopolysaccharide in Gram-negative bacteria. This Helicobacter pylori (strain P12) protein is 3-deoxy-manno-octulosonate cytidylyltransferase.